Reading from the N-terminus, the 1448-residue chain is Glutamate receptor ionotropic, NMDA 2B (1448 aa).

Positions Met-1 to Ala-24 are cleaved as a signal peptide. The Extracellular segment spans residues Gln-25–Asp-554. Cys-81 and Cys-316 are joined by a disulfide. Residues His-122 and Glu-279 each contribute to the Zn(2+) site. Residue Asn-336 is glycosylated (N-linked (GlcNAc...) asparagine). Disulfide bonds link Cys-426-Cys-453 and Cys-433-Cys-454. The L-glutamate site is built by Thr-511 and Arg-516. The chain crosses the membrane as a helical span at residues Val-555–Val-573. Residues Phe-574–Gly-600 lie on the Cytoplasmic side of the membrane. Positions Lys-601 to Pro-620 form an intramembrane region, discontinuously helical. Residues Lys-601–Pro-620 form a pore-forming region. Residues Lys-621–Ile-627 lie on the Cytoplasmic side of the membrane. The chain crosses the membrane as a helical span at residues Met-628 to Tyr-643. Topologically, residues Thr-644–Phe-819 are extracellular. Residue Asn-685 is glycosylated (N-linked (GlcNAc...) asparagine). L-glutamate is bound by residues Ser-687–Thr-688 and Asp-729. Residues Cys-743 and Cys-798 are joined by a disulfide bond. The chain crosses the membrane as a helical span at residues Tyr-820–Phe-839. Topologically, residues Phe-840 to Val-1448 are cytoplasmic. Over residues Ala-1254 to Gly-1265 the composition is skewed to polar residues. Positions Ala-1254–Arg-1277 are disordered. A compositionally biased stretch (basic residues) spans Ala-1267 to Arg-1277.

The protein belongs to the glutamate-gated ion channel (TC 1.A.10.1) family. NR2B/GRIN2B subfamily. Heterotetramer. Forms heterotetrameric channels composed of two GluN1/zeta subunits (GRIN1), and two identical GluN2/epsilon subunits (GRIN2A, GRIN2B, GRIN2C or GRIN2D) or GluN3 subunits (GRIN3A or GRIN3B) (in vitro). In vivo, the subunit composition may depend on the expression levels of the different subunits. In terms of tissue distribution, detected in oocytes.

It is found in the cell membrane. Its subcellular location is the postsynaptic cell membrane. It carries out the reaction Ca(2+)(in) = Ca(2+)(out). The enzyme catalyses Na(+)(in) = Na(+)(out). It catalyses the reaction K(+)(in) = K(+)(out). Component of N-methyl-D-aspartate (NMDA) receptors (NMDARs) that function as heterotetrameric, ligand-gated cation channels with high calcium permeability and voltage-dependent block by Mg(2+). Channel activation requires binding of the neurotransmitter L-glutamate to the GluN2 subunit, glycine binding to the GluN1 subunit, plus membrane depolarization to eliminate channel inhibition by Mg(2+). NMDARs mediate simultaneously the potasium efflux and the influx of calcium and sodium. Each GluN2 subunit confers differential attributes to channel properties, including activation, deactivation and desensitization kinetics, pH sensitivity, Ca2(+) permeability, and binding to allosteric modulators. The sequence is that of Glutamate receptor ionotropic, NMDA 2B from Xenopus laevis (African clawed frog).